The chain runs to 247 residues: Probable transcriptional regulatory protein LAF_0541 (247 aa).

Residues 1–22 (MSGHSKWHNIQGRKNAQDAKRG) are disordered.

It belongs to the TACO1 family.

Its subcellular location is the cytoplasm. The polypeptide is Probable transcriptional regulatory protein LAF_0541 (Limosilactobacillus fermentum (strain NBRC 3956 / LMG 18251) (Lactobacillus fermentum)).